The following is a 330-amino-acid chain: Ferredoxin--NADP reductase (330 aa).

The FAD site is built by Glu-35, Gln-43, Tyr-48, Val-90, Phe-123, Asp-285, and Thr-326.

The protein belongs to the ferredoxin--NADP reductase type 2 family. Homodimer. FAD serves as cofactor.

The catalysed reaction is 2 reduced [2Fe-2S]-[ferredoxin] + NADP(+) + H(+) = 2 oxidized [2Fe-2S]-[ferredoxin] + NADPH. This Streptococcus pyogenes serotype M6 (strain ATCC BAA-946 / MGAS10394) protein is Ferredoxin--NADP reductase.